The primary structure comprises 164 residues: Photosystem II extrinsic protein V (164 aa).

The first 27 residues, 1–27 (MIPNRKIQLSLFAVIIVFETLLNQVYA), serve as a signal peptide directing secretion. Cys-64, Cys-67, His-68, and Met-131 together coordinate heme c.

It belongs to the cytochrome c family. PsbV subfamily. PSII is composed of 1 copy each of membrane proteins PsbA, PsbB, PsbC, PsbD, PsbE, PsbF, PsbH, PsbI, PsbJ, PsbK, PsbL, PsbM, PsbT, PsbY, PsbZ, Psb30/Ycf12, at least 3 peripheral proteins of the oxygen-evolving complex and a large number of cofactors. It forms dimeric complexes. The extrinsic subunits in red algae are PsbO (OEC33), PsbQ', cytochrome c-550 and PsbU. Heme c is required as a cofactor.

It is found in the plastid. The protein localises to the chloroplast thylakoid membrane. Its function is as follows. One of the extrinsic, lumenal subunits of photosystem II (PSII). PSII is a light-driven water plastoquinone oxidoreductase, using light energy to abstract electrons from H(2)O, generating a proton gradient subsequently used for ATP formation. The extrinsic proteins stabilize the structure of photosystem II oxygen-evolving complex (OEC), the ion environment of oxygen evolution and protect the OEC against heat-induced inactivation. The protein is Photosystem II extrinsic protein V of Gracilaria tenuistipitata var. liui (Red alga).